The chain runs to 385 residues: Glucans biosynthesis protein C (385 aa).

10 helical membrane passes run 17-37 (AWLM…SHTW), 60-80 (MQVF…RYPL), 91-111 (VGIP…IMLQ), 137-157 (ISHL…VWIF), 173-193 (KFSM…YAVI), 212-232 (FIVM…LAFI), 245-262 (RGST…LLNQ), 274-294 (TESV…FSFG), 311-331 (ASLF…AYIT), and 338-358 (WLGF…LYEI).

The protein belongs to the acyltransferase 3 family. OpgC subfamily.

Its subcellular location is the cell membrane. Its pathway is glycan metabolism; osmoregulated periplasmic glucan (OPG) biosynthesis. Necessary for the succinyl substitution of periplasmic glucans. Could catalyze the transfer of succinyl residues from the cytoplasmic side of the membrane to the nascent glucan backbones on the periplasmic side of the membrane. The chain is Glucans biosynthesis protein C from Escherichia coli O81 (strain ED1a).